The following is a 415-amino-acid chain: MFNRNLTLDQVDPDVWAAIQKEDVRQEQHIELIASENYASPAVMQAQGTQLTNKYAEGYPGKRYYGGCEYVDVVEQLAIDRLKQIFGAEAANVQPNSGSQANQGVYMAVLKPGDTVLGMSLAEGGHLTHGASVNASGKLYNFVPYGLDADEVLDYAQVERLTKEHKPKLIVAGASAYALHIDFERMARIAHDNGALFMVDIAHYAGLVAGGAYPNPVPHADFVTSTTHKSLRGPRGGVIMMKAEFEKAVNSAIFPGIQGGPLMHVIAAKAVAFKEALSPEFQDYAQQVVKNAKVLADTLVKRGLRIVSGRTESHVMLVDLRPKGITGKEAEAVLGQAHITVNKNAIPNDPEKPFVTSGIRLGTPAMTTRGFKEAEAELTANLIADVLDNPRDEANIAAVRARVNELTARLPVYGN.

(6S)-5,6,7,8-tetrahydrofolate is bound by residues Leu121 and Gly125–Leu127. The residue at position 229 (Lys229) is an N6-(pyridoxal phosphate)lysine.

Belongs to the SHMT family. As to quaternary structure, homodimer. Pyridoxal 5'-phosphate serves as cofactor.

Its subcellular location is the cytoplasm. The catalysed reaction is (6R)-5,10-methylene-5,6,7,8-tetrahydrofolate + glycine + H2O = (6S)-5,6,7,8-tetrahydrofolate + L-serine. It participates in one-carbon metabolism; tetrahydrofolate interconversion. Its pathway is amino-acid biosynthesis; glycine biosynthesis; glycine from L-serine: step 1/1. Catalyzes the reversible interconversion of serine and glycine with tetrahydrofolate (THF) serving as the one-carbon carrier. This reaction serves as the major source of one-carbon groups required for the biosynthesis of purines, thymidylate, methionine, and other important biomolecules. Also exhibits THF-independent aldolase activity toward beta-hydroxyamino acids, producing glycine and aldehydes, via a retro-aldol mechanism. The polypeptide is Serine hydroxymethyltransferase 2 (Bordetella bronchiseptica (strain ATCC BAA-588 / NCTC 13252 / RB50) (Alcaligenes bronchisepticus)).